We begin with the raw amino-acid sequence, 143 residues long: Nucleoside diphosphate kinase (143 aa).

6 residues coordinate ATP: Lys11, Phe59, Arg87, Thr93, Arg104, and Asn114. The Pros-phosphohistidine intermediate role is filled by His117.

Belongs to the NDK family. As to quaternary structure, homotetramer. It depends on Mg(2+) as a cofactor.

It localises to the cytoplasm. The enzyme catalyses a 2'-deoxyribonucleoside 5'-diphosphate + ATP = a 2'-deoxyribonucleoside 5'-triphosphate + ADP. It catalyses the reaction a ribonucleoside 5'-diphosphate + ATP = a ribonucleoside 5'-triphosphate + ADP. Major role in the synthesis of nucleoside triphosphates other than ATP. The ATP gamma phosphate is transferred to the NDP beta phosphate via a ping-pong mechanism, using a phosphorylated active-site intermediate. The protein is Nucleoside diphosphate kinase of Shewanella pealeana (strain ATCC 700345 / ANG-SQ1).